The chain runs to 872 residues: Coatomer subunit gamma-2 (872 aa).

6 HEAT repeats span residues 64–101, 283–320, 321–355, 356–392, 395–430, and 467–504; these read MEAT…ISED, RELA…KHPS, AVTA…GSES, SVDR…KYPR, SVMM…ENPD, and PTPS…QNEP.

Belongs to the COPG family. As to quaternary structure, oligomeric complex.

The protein resides in the cytoplasm. It is found in the golgi apparatus membrane. The protein localises to the cytoplasmic vesicle. Its subcellular location is the COPI-coated vesicle membrane. The coatomer is a cytosolic protein complex that binds to dilysine motifs and reversibly associates with Golgi non-clathrin-coated vesicles, which further mediate biosynthetic protein transport from the ER, via the Golgi up to the trans Golgi network. Coatomer complex is required for budding from Golgi membranes, and is essential for the retrograde Golgi-to-ER transport of dilysine-tagged proteins. The protein is Coatomer subunit gamma-2 (copg2) of Xenopus tropicalis (Western clawed frog).